The sequence spans 180 residues: Interleukin-1-binding protein (180 aa).

An N-terminal signal peptide occupies residues 1-20 (MSILPVIFLPIFFYSPFVQT). N-linked (GlcNAc...) asparagine; by host glycans are attached at residues Asn80, Asn103, and Asn113.

This sequence belongs to the interleukin-1 receptor family. Interacts with mouse Il1b.

It is found in the secreted. Functionally, may reduce the host inflammatory response by interacting with inteleukin-1 beta (Il1b) and thus decreasing the association between IL1B and its cellular receptor. This is Interleukin-1-binding protein (OPG201) from Monkeypox virus.